Consider the following 151-residue polypeptide: MSSTILVIHGPNLNLLGKREPEVYGHLTLDNINQQLIAQAEQASITLDTFQSNWEGAIVDRIHQAQTEGVKLIIINPAALTHTSVALRDALLGVAIPFIEVHLSNVHAREAFRHHSYLSDKAIGVICGLGAKGYSFALDYAIEKIQPSNPN.

Y24 (proton acceptor) is an active-site residue. Positions 76, 82, and 89 each coordinate substrate. Catalysis depends on H102, which acts as the Proton donor. Residues 103-104 (LS) and R113 each bind substrate.

The protein belongs to the type-II 3-dehydroquinase family. As to quaternary structure, homododecamer.

The catalysed reaction is 3-dehydroquinate = 3-dehydroshikimate + H2O. It functions in the pathway metabolic intermediate biosynthesis; chorismate biosynthesis; chorismate from D-erythrose 4-phosphate and phosphoenolpyruvate: step 3/7. Catalyzes a trans-dehydration via an enolate intermediate. In Acinetobacter baumannii (strain AB307-0294), this protein is 3-dehydroquinate dehydratase.